A 78-amino-acid polypeptide reads, in one-letter code: MAKVCQVTGKRPVTGHNVSHAKNHTKRRFLPNLHTHRFWVESEKRFVKLRVSSKGMRIIDKNGIETVLSDIRARGEKI.

The interval 1–22 (MAKVCQVTGKRPVTGHNVSHAK) is disordered.

Belongs to the bacterial ribosomal protein bL28 family.

The protein is Large ribosomal subunit protein bL28 of Teredinibacter turnerae (strain ATCC 39867 / T7901).